The sequence spans 159 residues: MNITIISVGKLKEKYLKHAIDEYSKRLSRYCKLNILELQDEQTPDNASEKDELIIKDKEGNKILNSIKDNMYVITLDLKGKMMSSEELSKFIDNCGVRGNSNLCFVIGGSLGLSEAVLKRSNHSLCFSKMTFPHQLFRVMLLEQIYRAFRISNGEPYHK.

S-adenosyl-L-methionine-binding positions include L76, G108, and 127–132; that span reads FSKMTF.

It belongs to the RNA methyltransferase RlmH family. Homodimer.

The protein localises to the cytoplasm. The enzyme catalyses pseudouridine(1915) in 23S rRNA + S-adenosyl-L-methionine = N(3)-methylpseudouridine(1915) in 23S rRNA + S-adenosyl-L-homocysteine + H(+). Specifically methylates the pseudouridine at position 1915 (m3Psi1915) in 23S rRNA. The sequence is that of Ribosomal RNA large subunit methyltransferase H from Clostridium botulinum (strain Eklund 17B / Type B).